Consider the following 287-residue polypeptide: U1 small nuclear ribonucleoprotein A (287 aa).

The RRM 1 domain maps to 16-95 (HTIYINNLNE…KPMRIQYAKT (80 aa)). An N6-acetyllysine modification is found at Lys66. Residues 106 to 134 (TYVERDRKREKRKPKSQETPAAKKAVQGG) form a disordered region. The segment covering 125–134 (PAAKKAVQGG) has biased composition (low complexity). Arg157 carries the post-translational modification Omega-N-methylarginine. In terms of domain architecture, RRM 2 spans 213–287 (HILFLTNLPE…NAMKISFAKK (75 aa)).

This sequence belongs to the RRM U1 A/B'' family. U1 snRNP is composed of the 7 core Sm proteins SNRPB, SNRPD1, SNRPD2, SNRPD3, SNRPE, SNRPF and SNRPG that assemble in a heptameric protein ring on the Sm site of the small nuclear RNA to form the core snRNP, and at least three U1 snRNP-specific proteins SNRNP70/U1-70K, SNRPA/U1-A and SNRPC/U1-C. Interacts with SFPQ; component of a snRNP-free complex with SFPQ. Interacts with IVNS1ABP (via BACK domain); the interaction is indirect.

Its subcellular location is the nucleus. In terms of biological role, component of the spliceosomal U1 snRNP, which is essential for recognition of the pre-mRNA 5' splice-site and the subsequent assembly of the spliceosome. U1 snRNP is the first snRNP to interact with pre-mRNA. This interaction is required for the subsequent binding of U2 snRNP and the U4/U6/U5 tri-snRNP. SNRPA binds stem loop II of U1 snRNA. In a snRNP-free form (SF-A) may be involved in coupled pre-mRNA splicing and polyadenylation process. May bind preferentially to the 5'-UGCAC-3' motif on RNAs. The polypeptide is U1 small nuclear ribonucleoprotein A (Snrpa) (Mus musculus (Mouse)).